Reading from the N-terminus, the 93-residue chain is N-acetyl-S-hydroxy-L-cysteine reductase (93 aa).

A Glutaredoxin domain is found at 1–93 (MSDVVNIVVW…NHAQIKEAKR (93 aa)). A disulfide bridge links Cys-15 with Cys-18.

This sequence belongs to the glutaredoxin family.

It catalyses the reaction N-acetyl-S-hydroxy-L-cysteine + AH2 = N-acetyl-L-cysteine + A + H2O. It functions in the pathway amino-acid metabolism. Its function is as follows. Involved in a cysteine salvage pathway from S-alkylcysteine. Catalyzes the reduction of N-acetyl-S-hydroxy-L-cysteine (N-acetyl-L-cysteine sulfenic acid) to N-acetyl-L-cysteine. This pathway is likely important in the catabolism of alkylated cysteine generated by proteolysis of alkylated glutathione formed in the detoxification of a wide range of electrophiles. This chain is N-acetyl-S-hydroxy-L-cysteine reductase, found in Bacillus subtilis (strain 168).